A 112-amino-acid chain; its full sequence is U15-hexatoxin-Hi1a (112 aa).

A signal peptide spans 1–18 (MNTLIAFAVLLLLSTTLG). Positions 19-73 (DTDDKVSHEEIQERKELSGISEELLLQQLEAVEAALMEKERLEEMEEDGNSREKR) are excised as a propeptide. 3 cysteine pairs are disulfide-bonded: C74–C88, C81–C93, and C87–C107.

The protein belongs to the neurotoxin 14 (magi-1) family. 08 (Ltx-4) subfamily. As to expression, expressed by the venom gland.

The protein localises to the secreted. In terms of biological role, probable ion channel inhibitor. This chain is U15-hexatoxin-Hi1a, found in Hadronyche infensa (Fraser island funnel-web spider).